The sequence spans 329 residues: Beta-ketoacyl-[acyl-carrier-protein] synthase III (329 aa).

Active-site residues include C123 and H256. The interval 257–261 is ACP-binding; it reads QANIR. Residue N286 is part of the active site.

Belongs to the thiolase-like superfamily. FabH family. In terms of assembly, homodimer.

It is found in the cytoplasm. The catalysed reaction is malonyl-[ACP] + acetyl-CoA + H(+) = 3-oxobutanoyl-[ACP] + CO2 + CoA. Its pathway is lipid metabolism; fatty acid biosynthesis. Its function is as follows. Catalyzes the condensation reaction of fatty acid synthesis by the addition to an acyl acceptor of two carbons from malonyl-ACP. Catalyzes the first condensation reaction which initiates fatty acid synthesis and may therefore play a role in governing the total rate of fatty acid production. Possesses both acetoacetyl-ACP synthase and acetyl transacylase activities. Its substrate specificity determines the biosynthesis of branched-chain and/or straight-chain of fatty acids. This Burkholderia pseudomallei (strain 1710b) protein is Beta-ketoacyl-[acyl-carrier-protein] synthase III.